The following is a 738-amino-acid chain: Isocitrate dehydrogenase [NADP] (738 aa).

2 residues coordinate NADP(+): Asn-83 and Ser-85. Residues Ser-130, Asn-133, Arg-137, Arg-143, and Lys-253 each contribute to the D-threo-isocitrate site. NADP(+) is bound at residue Asn-133. Residue Asp-346 participates in Mg(2+) binding. D-threo-isocitrate-binding residues include Tyr-416 and Arg-543. Positions 544 and 548 each coordinate Mg(2+). Gly-580, His-585, Arg-596, Asp-598, and Arg-645 together coordinate NADP(+).

This sequence belongs to the monomeric-type IDH family. In terms of assembly, monomer. The cofactor is Mg(2+). Mn(2+) serves as cofactor.

It localises to the cytoplasm. It catalyses the reaction D-threo-isocitrate + NADP(+) = 2-oxoglutarate + CO2 + NADPH. Weakly inhibited by oxaloacetate, 2-oxoglutarate and citrate. Severely inhibited by oxaloacetate plus glyoxylate. Its function is as follows. Catalyzes the oxidative decarboxylation of isocitrate to 2-oxoglutarate and carbon dioxide with the concomitant reduction of NADP(+). Cannot use NAD(+). This is Isocitrate dehydrogenase [NADP] from Corynebacterium glutamicum (strain ATCC 13032 / DSM 20300 / JCM 1318 / BCRC 11384 / CCUG 27702 / LMG 3730 / NBRC 12168 / NCIMB 10025 / NRRL B-2784 / 534).